The chain runs to 318 residues: Cytosolic Fe-S cluster assembly factor Nubp1 homolog (318 aa).

Positions 1–15 (MSAPEVENKPADAPE) are enriched in basic and acidic residues. Residues 1–29 (MSAPEVENKPADAPEHCPGTESENAGKAS) form a disordered region. Positions 17, 31, 34, and 40 each coordinate [4Fe-4S] cluster. 70 to 77 (GKGGVGKS) is a binding site for ATP. Positions 245 and 248 each coordinate [4Fe-4S] cluster.

It belongs to the Mrp/NBP35 ATP-binding proteins family. NUBP1/NBP35 subfamily. Heterotetramer of 2 Nubp1 and 2 Nubp2 chains. It depends on [4Fe-4S] cluster as a cofactor.

It is found in the cytoplasm. Component of the cytosolic iron-sulfur (Fe/S) protein assembly (CIA) machinery. Required for maturation of extramitochondrial Fe-S proteins. The Nubp1-Nubp2 heterotetramer forms a Fe-S scaffold complex, mediating the de novo assembly of an Fe-S cluster and its transfer to target apoproteins. The protein is Cytosolic Fe-S cluster assembly factor Nubp1 homolog of Aedes aegypti (Yellowfever mosquito).